Here is a 316-residue protein sequence, read N- to C-terminus: Acetyl-coenzyme A carboxylase carboxyl transferase subunit alpha (316 aa).

The CoA carboxyltransferase C-terminal domain maps to 36-290; sequence LLEERLARLR…KEALLKALEE (255 aa).

This sequence belongs to the AccA family. Acetyl-CoA carboxylase is a heterohexamer composed of biotin carboxyl carrier protein (AccB), biotin carboxylase (AccC) and two subunits each of ACCase subunit alpha (AccA) and ACCase subunit beta (AccD).

The protein localises to the cytoplasm. The catalysed reaction is N(6)-carboxybiotinyl-L-lysyl-[protein] + acetyl-CoA = N(6)-biotinyl-L-lysyl-[protein] + malonyl-CoA. The protein operates within lipid metabolism; malonyl-CoA biosynthesis; malonyl-CoA from acetyl-CoA: step 1/1. Its function is as follows. Component of the acetyl coenzyme A carboxylase (ACC) complex. First, biotin carboxylase catalyzes the carboxylation of biotin on its carrier protein (BCCP) and then the CO(2) group is transferred by the carboxyltransferase to acetyl-CoA to form malonyl-CoA. The polypeptide is Acetyl-coenzyme A carboxylase carboxyl transferase subunit alpha (Thermus thermophilus (strain ATCC 27634 / DSM 579 / HB8)).